The following is a 141-amino-acid chain: Actin-depolymerizing factor 9 (141 aa).

A Phosphoserine modification is found at S8. The ADF-H domain occupies 8-141; the sequence is SGMWMTDDCK…GFDKIQDRAK (134 aa).

It belongs to the actin-binding proteins ADF family.

It is found in the cytoplasm. The protein resides in the cytoskeleton. Functionally, does not display typical F-actin depolymerizing activity. Exhibits a high ability to stabilize and cross-link actin filaments. Functions as an actin bundling protein with the highest efficiency under acidic conditions. May play a role in the modulation of levels of histone H3 lysine 4 trimethylation and H3 lysine 9 and 14 acetylation at the FLC locus. This Arabidopsis thaliana (Mouse-ear cress) protein is Actin-depolymerizing factor 9 (ADF9).